Consider the following 1143-residue polypeptide: AP-3 complex subunit delta (1143 aa).

8 HEAT repeats span residues Asp-129–Glu-166, Ser-167–Lys-203, Tyr-205–Arg-242, Lys-245–Ile-279, Pro-280–Lys-317, Ala-318–Ile-354, Asp-356–Tyr-389, and Leu-416–Gly-455. Disordered stretches follow at residues Lys-520–Glu-541, Gln-634–Ile-692, Lys-704–Ile-728, His-741–Leu-792, and Lys-829–Ala-899. The span at Leu-524–Asn-540 shows a compositional bias: acidic residues. A coiled-coil region spans residues Asp-526–Cys-550. The span at His-653–Arg-662 shows a compositional bias: basic residues. Residues Asp-666–Thr-675 show a composition bias toward acidic residues. A coiled-coil region spans residues Thr-814 to Ser-835. Over residues Pro-840–Thr-849 the composition is skewed to polar residues. Composition is skewed to low complexity over residues Ala-854–Ser-867 and Lys-881–Ala-899. Residues Lys-914–Ser-1016 enclose the GAE domain.

The protein belongs to the adaptor complexes large subunit family. As to quaternary structure, adaptor protein complex 3 (AP-3) is a heterotetramer composed of two large adaptins (delta-type subunit and beta-type subunit), a medium adaptin (mu-type subunit) and a small adaptin (sigma-type subunit).

It is found in the endosome membrane. Its function is as follows. Part of the AP-3 complex, an adaptor-related complex which is essential for the compartmentalization of the endocytic pathway. The chain is AP-3 complex subunit delta (ap3d1) from Dictyostelium discoideum (Social amoeba).